The chain runs to 239 residues: Ribose-5-phosphate isomerase A (239 aa).

Residues 34–37, 94–97, and 107–110 each bind substrate; these read TGST, DGAD, and KGGG. Glu-116 acts as the Proton acceptor in catalysis. Residue Lys-134 coordinates substrate.

The protein belongs to the ribose 5-phosphate isomerase family. As to quaternary structure, homodimer.

It carries out the reaction aldehydo-D-ribose 5-phosphate = D-ribulose 5-phosphate. It participates in carbohydrate degradation; pentose phosphate pathway; D-ribose 5-phosphate from D-ribulose 5-phosphate (non-oxidative stage): step 1/1. In terms of biological role, catalyzes the reversible conversion of ribose-5-phosphate to ribulose 5-phosphate. This Treponema denticola (strain ATCC 35405 / DSM 14222 / CIP 103919 / JCM 8153 / KCTC 15104) protein is Ribose-5-phosphate isomerase A.